The chain runs to 668 residues: Protein PLASTID TRANSCRIPTIONALLY ACTIVE 10 (668 aa).

The N-terminal 40 residues, 1–40, are a transit peptide targeting the chloroplast; sequence MQICQTKLNFTFPNPTNPNFCKPKALQWSPPRRISLLPCR. Residues 272–340 form the S1 motif domain; that stretch reads GMVCEGTVTT…YRFRFPLELR (69 aa). The segment covering 362–391 has biased composition (basic and acidic residues); that stretch reads RDGDTNPDEIRRDCGRPPEPRKDPGSKPEE. Positions 362 to 394 are disordered; the sequence is RDGDTNPDEIRRDCGRPPEPRKDPGSKPEEEGL. The residue at position 434 (Ser-434) is a Phosphoserine. The disordered stretch occupies residues 611-668; it reads KRKEGSTLASQEEETESEEEEEDDDDFDDFDYSILSDESSIGYSEQQPLVNGTQVLTD. Residues 621–641 show a composition bias toward acidic residues; sequence QEEETESEEEEEDDDDFDDFD. The span at 646–668 shows a compositional bias: polar residues; that stretch reads SDESSIGYSEQQPLVNGTQVLTD.

As to quaternary structure, component of the transcriptionally active chromosome (TAC) complexes. Interacts with PTAC7.

It is found in the plastid. The protein resides in the chloroplast. This Arabidopsis thaliana (Mouse-ear cress) protein is Protein PLASTID TRANSCRIPTIONALLY ACTIVE 10.